The primary structure comprises 217 residues: Thymidylate kinase (217 aa).

Residue Gly-12–Ser-19 participates in ATP binding.

It belongs to the thymidylate kinase family.

It catalyses the reaction dTMP + ATP = dTDP + ADP. Functionally, phosphorylation of dTMP to form dTDP in both de novo and salvage pathways of dTTP synthesis. This Cereibacter sphaeroides (strain ATCC 17023 / DSM 158 / JCM 6121 / CCUG 31486 / LMG 2827 / NBRC 12203 / NCIMB 8253 / ATH 2.4.1.) (Rhodobacter sphaeroides) protein is Thymidylate kinase.